A 1228-amino-acid polypeptide reads, in one-letter code: Clustered mitochondria protein homolog (1228 aa).

One can recognise a Clu domain in the interval 298 to 557; the sequence is PSSLPSNSID…DNNPLDVGFA (260 aa). The TPR 1 repeat unit spans residues 486-519; that stretch reads CYGFDEASNKVIADAEFGSSLDDFAKVFHLKKHE. Residues 671–702 are a coiled coil; the sequence is LGRVIELAEQELEAQRALREAHLQQVEADNKE. TPR repeat units lie at residues 982–1015 and 1108–1141; these read AESY…YERV and AVNE…FSKE.

The protein belongs to the CLU family. May associate with the eukaryotic translation initiation factor 3 (eIF-3) complex.

It localises to the cytoplasm. In terms of biological role, mRNA-binding protein involved in proper cytoplasmic distribution of mitochondria. The sequence is that of Clustered mitochondria protein homolog from Eremothecium gossypii (strain ATCC 10895 / CBS 109.51 / FGSC 9923 / NRRL Y-1056) (Yeast).